The sequence spans 169 residues: Crossover junction endodeoxyribonuclease RuvC (169 aa).

Active-site residues include Asp-7, Glu-67, and Asp-140. Residues Asp-7, Glu-67, and Asp-140 each contribute to the Mg(2+) site.

The protein belongs to the RuvC family. Homodimer which binds Holliday junction (HJ) DNA. The HJ becomes 2-fold symmetrical on binding to RuvC with unstacked arms; it has a different conformation from HJ DNA in complex with RuvA. In the full resolvosome a probable DNA-RuvA(4)-RuvB(12)-RuvC(2) complex forms which resolves the HJ. The cofactor is Mg(2+).

The protein localises to the cytoplasm. The enzyme catalyses Endonucleolytic cleavage at a junction such as a reciprocal single-stranded crossover between two homologous DNA duplexes (Holliday junction).. Functionally, the RuvA-RuvB-RuvC complex processes Holliday junction (HJ) DNA during genetic recombination and DNA repair. Endonuclease that resolves HJ intermediates. Cleaves cruciform DNA by making single-stranded nicks across the HJ at symmetrical positions within the homologous arms, yielding a 5'-phosphate and a 3'-hydroxyl group; requires a central core of homology in the junction. The consensus cleavage sequence is 5'-(A/T)TT(C/G)-3'. Cleavage occurs on the 3'-side of the TT dinucleotide at the point of strand exchange. HJ branch migration catalyzed by RuvA-RuvB allows RuvC to scan DNA until it finds its consensus sequence, where it cleaves and resolves the cruciform DNA. This chain is Crossover junction endodeoxyribonuclease RuvC, found in Clostridioides difficile (strain 630) (Peptoclostridium difficile).